Reading from the N-terminus, the 215-residue chain is Adenylate kinase (215 aa).

10 to 15 lines the ATP pocket; that stretch reads GAGKGT. The segment at 30 to 59 is NMP; it reads STGDIFRKNISENTPLGMEARSYMDKGLLV. AMP is bound by residues threonine 31, arginine 36, 57–59, 85–88, and glutamine 92; these read LLV and GFPR. Residues 126–163 are LID; that stretch reads GRRVCTSCGGSFHIKFNPPTIDGKCNLCGSDIVQRKDD. An ATP-binding site is contributed by arginine 127. Residues cysteine 130 and cysteine 133 each coordinate Zn(2+). 136-137 contributes to the ATP binding site; sequence SF. The Zn(2+) site is built by cysteine 150 and cysteine 153. Residues arginine 160 and arginine 171 each coordinate AMP. Residue lysine 199 coordinates ATP.

This sequence belongs to the adenylate kinase family. In terms of assembly, monomer.

It is found in the cytoplasm. The catalysed reaction is AMP + ATP = 2 ADP. It functions in the pathway purine metabolism; AMP biosynthesis via salvage pathway; AMP from ADP: step 1/1. Its function is as follows. Catalyzes the reversible transfer of the terminal phosphate group between ATP and AMP. Plays an important role in cellular energy homeostasis and in adenine nucleotide metabolism. The chain is Adenylate kinase from Clostridium botulinum (strain Eklund 17B / Type B).